Here is a 502-residue protein sequence, read N- to C-terminus: Probable cytochrome P450 6a23 (502 aa).

Heme is bound at residue cysteine 445.

This sequence belongs to the cytochrome P450 family. Heme is required as a cofactor.

Its subcellular location is the endoplasmic reticulum membrane. It is found in the microsome membrane. In terms of biological role, may be involved in the metabolism of insect hormones and in the breakdown of synthetic insecticides. This is Probable cytochrome P450 6a23 (Cyp6a23) from Drosophila melanogaster (Fruit fly).